Consider the following 265-residue polypeptide: Arginine and glutamate-rich protein 1 (265 aa).

Residues 1–54 (MGRSRSRSSSRSKHAKSGKHNKKRSRSREKERVRKRSKSRESKRNRRRESRSRS) are compositionally biased toward basic residues. The segment at 1–66 (MGRSRSRSSS…NTASRRERER (66 aa)) is necessary and sufficient for RNA binding. A disordered region spans residues 1 to 106 (MGRSRSRSSS…EKKAEYERQR (106 aa)). Basic and acidic residues-rich tracts occupy residues 60 to 76 (SRRE…RIDI) and 85 to 106 (SSLD…ERQR). Positions 67 to 265 (AASPPDRIDI…KLSFSLKSPD (199 aa)) are necessary and sufficient for transcriptional regulation. Residues 164–168 (LLEEL) carry the LXXLL motif 1; degenerate motif. Positions 193–197 (LERIL) match the LXXLL motif 2; degenerate motif. Positions 229–245 (RMKLEQERQRQQKEEQK) are enriched in basic and acidic residues. Residues 229–265 (RMKLEQERQRQQKEEQKIILGKGKSRPKLSFSLKSPD) are disordered.

Belongs to the ARGLU1 family.

The protein localises to the nucleus. The protein resides in the nucleus speckle. Its subcellular location is the chromosome. Functionally, dual function regulator of gene expression; regulator of transcription and modulator of alternative splicing. General coactivator of nuclear receptor-induced gene expression. In Xenopus tropicalis (Western clawed frog), this protein is Arginine and glutamate-rich protein 1 (arglu1).